An 80-amino-acid polypeptide reads, in one-letter code: D-alanyl carrier protein (80 aa).

The Carrier domain occupies 1 to 77 (MDIQKQIVDI…KLVEQVKKLQ (77 aa)). Ser35 bears the O-(pantetheine 4'-phosphoryl)serine mark.

It belongs to the DltC family. 4'-phosphopantetheine is transferred from CoA to a specific serine of apo-DCP.

The protein resides in the cytoplasm. The protein operates within cell wall biogenesis; lipoteichoic acid biosynthesis. In terms of biological role, carrier protein involved in the D-alanylation of lipoteichoic acid (LTA). The loading of thioester-linked D-alanine onto DltC is catalyzed by D-alanine--D-alanyl carrier protein ligase DltA. The DltC-carried D-alanyl group is further transferred to cell membrane phosphatidylglycerol (PG) by forming an ester bond, probably catalyzed by DltD. D-alanylation of LTA plays an important role in modulating the properties of the cell wall in Gram-positive bacteria, influencing the net charge of the cell wall. The chain is D-alanyl carrier protein from Lactobacillus delbrueckii subsp. bulgaricus (strain ATCC 11842 / DSM 20081 / BCRC 10696 / JCM 1002 / NBRC 13953 / NCIMB 11778 / NCTC 12712 / WDCM 00102 / Lb 14).